The chain runs to 313 residues: MNDTVHKHITVLLHEAVDGLAIKPNGIYIDGTFGRGGHSRLILSKLSEQGRLIATDRDPRAIAEANTIDDTRFQIVHTAFSAIPDVCEQLGLTGKIDGILLDLGVSSPQLDDAERGFSFMRDGPLDMRMDTTKGLSAAEWLAQVSADDLAWVLKTFGEERFAKRIAQAVVSYNKSVTDKISRTLQLAQIIADAVPFKDKHKHPATRSFQAIRIFINSELDELEKALQSALSVLAPEGRLSIISFHSLEDRMVKQFMKKNSKGMDVPKGLPILESELNKNIPLKIIGKAIMPSEAEIEANPRSRSAVLRIAEKR.

S-adenosyl-L-methionine is bound by residues 36-38 (GGH), Asp56, Phe80, Asp102, and Gln109.

This sequence belongs to the methyltransferase superfamily. RsmH family.

It is found in the cytoplasm. It carries out the reaction cytidine(1402) in 16S rRNA + S-adenosyl-L-methionine = N(4)-methylcytidine(1402) in 16S rRNA + S-adenosyl-L-homocysteine + H(+). Functionally, specifically methylates the N4 position of cytidine in position 1402 (C1402) of 16S rRNA. The chain is Ribosomal RNA small subunit methyltransferase H from Actinobacillus pleuropneumoniae serotype 3 (strain JL03).